Here is a 547-residue protein sequence, read N- to C-terminus: Chaperonin GroEL (547 aa).

ATP is bound by residues 30-33, Lys-51, 87-91, Gly-415, and Asp-496; these read TLGP and DGTTT.

Belongs to the chaperonin (HSP60) family. Forms a cylinder of 14 subunits composed of two heptameric rings stacked back-to-back. Interacts with the co-chaperonin GroES.

It is found in the cytoplasm. The catalysed reaction is ATP + H2O + a folded polypeptide = ADP + phosphate + an unfolded polypeptide.. Functionally, together with its co-chaperonin GroES, plays an essential role in assisting protein folding. The GroEL-GroES system forms a nano-cage that allows encapsulation of the non-native substrate proteins and provides a physical environment optimized to promote and accelerate protein folding. The protein is Chaperonin GroEL of Chlorobaculum parvum (strain DSM 263 / NCIMB 8327) (Chlorobium vibrioforme subsp. thiosulfatophilum).